A 98-amino-acid polypeptide reads, in one-letter code: Exopolysaccharide production repressor protein (98 aa).

The next 2 membrane-spanning stretches (helical) occupy residues 6–26 (VFLS…YLNG) and 35–55 (TLIC…FLVW). A disordered region spans residues 73–98 (AEAANDEKQPGKVSLRRLNRPHHLNS). Over residues 86-98 (SLRRLNRPHHLNS) the composition is skewed to basic residues.

It localises to the cell membrane. It participates in glycan metabolism; exopolysaccharide biosynthesis. Functionally, inhibition of exopolysaccharide synthesis (EPS) and nodulation ability (NOD). This Rhizobium meliloti (strain 1021) (Ensifer meliloti) protein is Exopolysaccharide production repressor protein (exoX).